A 904-amino-acid chain; its full sequence is Protein translocase subunit SecA (904 aa).

ATP is bound by residues Q87, 105–109 (GEGKT), and D512. The segment at 851–870 (LARQQQLSHQTDNSALMSEE) is disordered. C888, C890, C899, and H900 together coordinate Zn(2+).

It belongs to the SecA family. In terms of assembly, monomer and homodimer. Part of the essential Sec protein translocation apparatus which comprises SecA, SecYEG and auxiliary proteins SecDF-YajC and YidC. Requires Zn(2+) as cofactor.

The protein localises to the cell inner membrane. It is found in the cytoplasm. The enzyme catalyses ATP + H2O + cellular proteinSide 1 = ADP + phosphate + cellular proteinSide 2.. Functionally, part of the Sec protein translocase complex. Interacts with the SecYEG preprotein conducting channel. Has a central role in coupling the hydrolysis of ATP to the transfer of proteins into and across the cell membrane, serving both as a receptor for the preprotein-SecB complex and as an ATP-driven molecular motor driving the stepwise translocation of polypeptide chains across the membrane. The polypeptide is Protein translocase subunit SecA (Yersinia pseudotuberculosis serotype O:1b (strain IP 31758)).